The primary structure comprises 306 residues: Brix domain-containing protein C4F8.04 (306 aa).

The tract at residues 16–49 (KALHQKNKDKLERRKERAKEEEKDPEKKRLRLSE) is disordered. The segment covering 21–42 (KNKDKLERRKERAKEEEKDPEK) has biased composition (basic and acidic residues). The Brix domain maps to 94 to 283 (PKLLVTTSKR…LRMVQKGVWD (190 aa)).

This chain is Brix domain-containing protein C4F8.04, found in Schizosaccharomyces pombe (strain 972 / ATCC 24843) (Fission yeast).